The following is a 160-amino-acid chain: MPAFDIVSEVDNVELKNAVDNATRELATRFDFRGVDASFELKGENIKIKAEDDFQLSQLVDILRGNLAKRGVDARAMDIKDAVHSGKNFYQDIDFKQGVDTLIAKKLVKEIKASNIKVQAAIQGEQLRITGKKRDDLQAVMALVREGDFGQPFQFTNFRD.

This sequence belongs to the YajQ family.

Nucleotide-binding protein. The protein is Nucleotide-binding protein VFMJ11_1323 of Aliivibrio fischeri (strain MJ11) (Vibrio fischeri).